The chain runs to 132 residues: Small ribosomal subunit protein uS8c (132 aa).

It belongs to the universal ribosomal protein uS8 family. Part of the 30S ribosomal subunit.

The protein resides in the plastid. It localises to the chloroplast. In terms of biological role, one of the primary rRNA binding proteins, it binds directly to 16S rRNA central domain where it helps coordinate assembly of the platform of the 30S subunit. The chain is Small ribosomal subunit protein uS8c (rps8) from Psilotum nudum (Whisk fern).